Reading from the N-terminus, the 132-residue chain is Small ribosomal subunit protein eS24 (132 aa).

Residues 90-100 show a composition bias toward basic and acidic residues; the sequence is RLARHGLFEKK. The disordered stretch occupies residues 90 to 132; it reads RLARHGLFEKKKTSRKQRKERKNRMKKVRGTKKASVGASKKKD. Residues 101–121 are compositionally biased toward basic residues; the sequence is KTSRKQRKERKNRMKKVRGTK.

This sequence belongs to the eukaryotic ribosomal protein eS24 family. Component of the small ribosomal subunit.

Its subcellular location is the cytoplasm. Functionally, component of the small ribosomal subunit. The ribosome is a large ribonucleoprotein complex responsible for the synthesis of proteins in the cell. Required for processing of pre-rRNA and maturation of 40S ribosomal subunits. This is Small ribosomal subunit protein eS24 (rps24) from Takifugu rubripes (Japanese pufferfish).